We begin with the raw amino-acid sequence, 283 residues long: Bifunctional protein FolD (283 aa).

Residues 163–165, S188, and I229 contribute to the NADP(+) site; that span reads GRS.

Belongs to the tetrahydrofolate dehydrogenase/cyclohydrolase family. In terms of assembly, homodimer.

It catalyses the reaction (6R)-5,10-methylene-5,6,7,8-tetrahydrofolate + NADP(+) = (6R)-5,10-methenyltetrahydrofolate + NADPH. The enzyme catalyses (6R)-5,10-methenyltetrahydrofolate + H2O = (6R)-10-formyltetrahydrofolate + H(+). Its pathway is one-carbon metabolism; tetrahydrofolate interconversion. Functionally, catalyzes the oxidation of 5,10-methylenetetrahydrofolate to 5,10-methenyltetrahydrofolate and then the hydrolysis of 5,10-methenyltetrahydrofolate to 10-formyltetrahydrofolate. This Latilactobacillus sakei subsp. sakei (strain 23K) (Lactobacillus sakei subsp. sakei) protein is Bifunctional protein FolD.